The sequence spans 74 residues: Protein SlyX homolog (74 aa).

Belongs to the SlyX family.

This is Protein SlyX homolog from Aliivibrio fischeri (strain ATCC 700601 / ES114) (Vibrio fischeri).